Consider the following 367-residue polypeptide: Cyclin-D5-1 (367 aa).

Positions 307 to 333 (QPTSPASKSTTTTTGKRSSSSSCSEST) are disordered.

Belongs to the cyclin family. Cyclin D subfamily.

The sequence is that of Cyclin-D5-1 (CYCD5-1) from Oryza sativa subsp. japonica (Rice).